The sequence spans 340 residues: Flavonoid 7-O-methyltransferase 2 (340 aa).

An S-adenosyl-L-methionine-binding site is contributed by aspartate 207. Histidine 245 (proton acceptor) is an active-site residue.

Belongs to the class I-like SAM-binding methyltransferase superfamily. Cation-independent O-methyltransferase family. Homodimer. In terms of tissue distribution, expressed in leaves.

It catalyses the reaction scutellarein 4'-methyl ether + S-adenosyl-L-methionine = ladanein + S-adenosyl-L-homocysteine. The catalysed reaction is acacetin + S-adenosyl-L-methionine = apigenin 4',7-dimethyl ether + S-adenosyl-L-homocysteine. It carries out the reaction diosmetin + S-adenosyl-L-methionine = luteolin 4',7-dimethyl ether + S-adenosyl-L-homocysteine. The enzyme catalyses chrysoeriol + S-adenosyl-L-methionine = velutin + S-adenosyl-L-homocysteine. It catalyses the reaction (2S)-naringenin + S-adenosyl-L-methionine = (2S)-sakuranetin + S-adenosyl-L-homocysteine + H(+). The catalysed reaction is apigenin + S-adenosyl-L-methionine = genkwanin + S-adenosyl-L-homocysteine + H(+). It carries out the reaction luteolin + S-adenosyl-L-methionine = luteolin 7-methyl ether + S-adenosyl-L-homocysteine + H(+). The enzyme catalyses scutellarein + S-adenosyl-L-methionine = scutellarein 7-methyl ether + S-adenosyl-L-homocysteine. The protein operates within flavonoid metabolism. Functionally, flavonoid 7-O-methyltransferase involved in the biosynthesis of polymethoxylated flavonoids natural products such as nevadensin and salvigenin, aroma compounds which contribute to the flavor of sweet basil, and exhibit pharmacological activities such as anti-allergic, anti-oxidant, antibacterial, anti-proliferative, and anti-inflammatory effects. Catalyzes S-adenosylmethionine-dependent regioselective 7-O-methylation of flavonoids; active on various hydroxylated flavonoid substrates, including apigenin (API) and luteolin (LUT), and, with a lower efficiency, scutellarein (SCU), naringenin (NAR), chrysoeriol (CHRYS), diosmetin (DIOS), acacetin (ACA) and scutellarein-7-methyl ether (SCU7Me). This is Flavonoid 7-O-methyltransferase 2 from Ocimum basilicum (Sweet basil).